The sequence spans 343 residues: Glyceraldehyde-3-phosphate dehydrogenase 1 (343 aa).

NAD(+)-binding positions include 13–14, D35, R79, and S121; that span reads RI. D-glyceraldehyde 3-phosphate-binding positions include 154 to 156, T185, 214 to 215, and R237; these read SCT and TG. The active-site Nucleophile is C155. N319 contributes to the NAD(+) binding site.

This sequence belongs to the glyceraldehyde-3-phosphate dehydrogenase family. As to quaternary structure, homotetramer.

It localises to the cytoplasm. The catalysed reaction is D-glyceraldehyde 3-phosphate + phosphate + NAD(+) = (2R)-3-phospho-glyceroyl phosphate + NADH + H(+). It functions in the pathway carbohydrate degradation; glycolysis; pyruvate from D-glyceraldehyde 3-phosphate: step 1/5. In terms of biological role, catalyzes the oxidative phosphorylation of glyceraldehyde 3-phosphate (G3P) to 1,3-bisphosphoglycerate (BPG) using the cofactor NAD. The first reaction step involves the formation of a hemiacetal intermediate between G3P and a cysteine residue, and this hemiacetal intermediate is then oxidized to a thioester, with concomitant reduction of NAD to NADH. The reduced NADH is then exchanged with the second NAD, and the thioester is attacked by a nucleophilic inorganic phosphate to produce BPG. The sequence is that of Glyceraldehyde-3-phosphate dehydrogenase 1 (gap1) from Trichormus variabilis (strain ATCC 29413 / PCC 7937) (Anabaena variabilis).